The chain runs to 183 residues: MSLIDQAREQMAKTVENTKENFSGIRTGRANPALLNGITVDYYGAPTPIKAVASIGVPEPRTLSVTPFDASQAGAVEKALRNSDLGVSPNRDGNVIRLTMPELTEERRKEYVKLAKGKAEDGKVAVRNIRRKTKEALDKAVKDGEMGEDEGDRLLKDLDKVTKSVTDEIDALLESKQKEIMEV.

The protein belongs to the RRF family.

Its subcellular location is the cytoplasm. Functionally, responsible for the release of ribosomes from messenger RNA at the termination of protein biosynthesis. May increase the efficiency of translation by recycling ribosomes from one round of translation to another. In Bifidobacterium longum subsp. infantis (strain ATCC 15697 / DSM 20088 / JCM 1222 / NCTC 11817 / S12), this protein is Ribosome-recycling factor.